The primary structure comprises 266 residues: uncharacterized protein (266 aa).

An N-terminal signal peptide occupies residues 1–22 (MGYLKRLVLYIVIMVMSVFIIG). C23 carries N-palmitoyl cysteine lipidation. C23 carries S-diacylglycerol cysteine lipidation.

It belongs to the staphylococcal tandem lipoprotein family.

It localises to the cell membrane. This is an uncharacterized protein from Staphylococcus aureus (strain USA300).